We begin with the raw amino-acid sequence, 427 residues long: Glutamate-1-semialdehyde 2,1-aminomutase (427 aa).

Position 267 is an N6-(pyridoxal phosphate)lysine (lysine 267).

It belongs to the class-III pyridoxal-phosphate-dependent aminotransferase family. HemL subfamily. As to quaternary structure, homodimer. Pyridoxal 5'-phosphate serves as cofactor.

The protein localises to the cytoplasm. The catalysed reaction is (S)-4-amino-5-oxopentanoate = 5-aminolevulinate. Its pathway is porphyrin-containing compound metabolism; protoporphyrin-IX biosynthesis; 5-aminolevulinate from L-glutamyl-tRNA(Glu): step 2/2. This Geobacter metallireducens (strain ATCC 53774 / DSM 7210 / GS-15) protein is Glutamate-1-semialdehyde 2,1-aminomutase.